The primary structure comprises 133 residues: UPF0102 protein AB57_1130 (133 aa).

This sequence belongs to the UPF0102 family.

This Acinetobacter baumannii (strain AB0057) protein is UPF0102 protein AB57_1130.